Here is a 72-residue protein sequence, read N- to C-terminus: Exodeoxyribonuclease 7 small subunit (72 aa).

The protein belongs to the XseB family. Heterooligomer composed of large and small subunits.

It is found in the cytoplasm. The enzyme catalyses Exonucleolytic cleavage in either 5'- to 3'- or 3'- to 5'-direction to yield nucleoside 5'-phosphates.. Functionally, bidirectionally degrades single-stranded DNA into large acid-insoluble oligonucleotides, which are then degraded further into small acid-soluble oligonucleotides. The protein is Exodeoxyribonuclease 7 small subunit of Chlamydia trachomatis serovar L2 (strain ATCC VR-902B / DSM 19102 / 434/Bu).